A 604-amino-acid chain; its full sequence is Serine/threonine-protein phosphatase 2B catalytic subunit A2 (604 aa).

The interval 21 to 48 (NKTERPQSSTTPIDSKASTVAAANSTAT) is disordered. A Phosphothreonine modification is found at Thr-31. Residues 35 to 48 (SKASTVAAANSTAT) are compositionally biased toward low complexity. Fe cation contacts are provided by Asp-144, His-146, and Asp-172. 2 residues coordinate Zn(2+): Asp-172 and Asn-204. His-205 acts as the Proton donor in catalysis. Zn(2+)-binding residues include His-253 and His-359. Residues 470-497 (KKLPQAGKSEATPQPATSASPKHASILD) form a disordered region. Residues 480 to 489 (ATPQPATSAS) are compositionally biased toward polar residues. 2 positions are modified to phosphoserine: Ser-489 and Ser-520. The calmodulin-binding stretch occupies residues 501–523 (RRKALRNKILAVAKVSRMYSVLR).

The protein belongs to the PPP phosphatase family. PP-2B subfamily. Composed of two components (A and B), the A component is the catalytic subunit and the B component confers calcium sensitivity. Fe(3+) serves as cofactor. Zn(2+) is required as a cofactor.

The enzyme catalyses O-phospho-L-seryl-[protein] + H2O = L-seryl-[protein] + phosphate. It catalyses the reaction O-phospho-L-threonyl-[protein] + H2O = L-threonyl-[protein] + phosphate. Its function is as follows. Calcium-dependent, calmodulin-stimulated protein phosphatase. This subunit may have a role in the calmodulin activation of calcineurin. This is Serine/threonine-protein phosphatase 2B catalytic subunit A2 (CMP2) from Saccharomyces cerevisiae (strain ATCC 204508 / S288c) (Baker's yeast).